The primary structure comprises 364 residues: tRNA 2-selenouridine synthase (364 aa).

The region spanning 14-137 (LLADTPLIDV…LRQTAIQATW (124 aa)) is the Rhodanese domain. Catalysis depends on Cys97, which acts as the S-selanylcysteine intermediate.

The protein belongs to the SelU family. In terms of assembly, monomer.

The catalysed reaction is 5-methylaminomethyl-2-thiouridine(34) in tRNA + selenophosphate + (2E)-geranyl diphosphate + H2O + H(+) = 5-methylaminomethyl-2-selenouridine(34) in tRNA + (2E)-thiogeraniol + phosphate + diphosphate. The enzyme catalyses 5-methylaminomethyl-2-thiouridine(34) in tRNA + (2E)-geranyl diphosphate = 5-methylaminomethyl-S-(2E)-geranyl-thiouridine(34) in tRNA + diphosphate. It catalyses the reaction 5-methylaminomethyl-S-(2E)-geranyl-thiouridine(34) in tRNA + selenophosphate + H(+) = 5-methylaminomethyl-2-(Se-phospho)selenouridine(34) in tRNA + (2E)-thiogeraniol. It carries out the reaction 5-methylaminomethyl-2-(Se-phospho)selenouridine(34) in tRNA + H2O = 5-methylaminomethyl-2-selenouridine(34) in tRNA + phosphate. In terms of biological role, involved in the post-transcriptional modification of the uridine at the wobble position (U34) of tRNA(Lys), tRNA(Glu) and tRNA(Gln). Catalyzes the conversion of 2-thiouridine (S2U-RNA) to 2-selenouridine (Se2U-RNA). Acts in a two-step process involving geranylation of 2-thiouridine (S2U) to S-geranyl-2-thiouridine (geS2U) and subsequent selenation of the latter derivative to 2-selenouridine (Se2U) in the tRNA chain. This chain is tRNA 2-selenouridine synthase, found in Salmonella agona (strain SL483).